The primary structure comprises 108 residues: N(4)-acetylcytidine amidohydrolase (108 aa).

The region spanning Ile5–Val102 is the ASCH domain. The active-site Proton acceptor is the Lys20. Thr23 functions as the Nucleophile in the catalytic mechanism. Glu73 (proton donor) is an active-site residue.

It belongs to the N(4)-acetylcytidine amidohydrolase family.

The enzyme catalyses N(4)-acetylcytidine + H2O = cytidine + acetate + H(+). The catalysed reaction is N(4)-acetyl-2'-deoxycytidine + H2O = 2'-deoxycytidine + acetate + H(+). It catalyses the reaction N(4)-acetylcytosine + H2O = cytosine + acetate + H(+). In terms of biological role, catalyzes the hydrolysis of N(4)-acetylcytidine (ac4C). The polypeptide is N(4)-acetylcytidine amidohydrolase (Moritella marina (Vibrio marinus)).